We begin with the raw amino-acid sequence, 961 residues long: MKEAKDARYTNGHLFTTISVSGMTMCYACNKSITAKEALICPTCNVTIHNRCKDTLANCTKVKQKQQKAALLKNNTALQSVSLRSKTTTRERPSSAIYPSDSFRQSLLGSRRGRSPLSLAKSVSTTNIAGHFNDESPLGLRRILSQSTDSLNMRNRTLSVESLIDEGAEVIYNELMSDFEMGEKDFAADSWSLAVDSSFLQQHKKEVMKQQDVIYELIQTELHHVRTLKIMTRLFRTGMLEELQLEPGVVQGLFPCVDELSDIHTRFLSQLLERRRQALCPGSPRNFVIHRLGDLLITQFSGPSADQMRKTYSEFCSRHTKALKLYKELYARDKRFQQFIRKVTRSAVLKRHGVQECILLVTQRITKYPVLISRILQHTHGIEEERQDLTTALGLVKELLSNVDQDVHELEKGARLQEIYNRMDPRAQTPVPGKGPFGREELLRRKLIHDGCLLWKTAAGRFKDVLMLLMTDVLVFLQEKDQKYIFPALDKPSVVSLQNLIVRDIANQEKGMFLISAAPPEMYEVHTASRDDRSTWIRVIQQSVRVCPSREDFPLIETEDEAYLRRIKMELQQKDRALVELLQEKVGLFAEMTHFQVEEDGGGGMPLPTLPRGLFRSESLESPRGERLLQDAIREVEGLKDLLVGPGVELLLTSREPALPVETDSGGNTSPGVTANGEARTFNGSIELCRADSDSSQKDRNGNQLRSPQEEALQRLVNLYGLLHGLQAAVAQQDTLMEARFPEGPERREKLTRANSRDGEAGRAGAAPVAPEKQATELALLQRQHALLQEELRRCRRLGEERATEAGSLEARLRESEQARALLEREVEEARRQLAALGHTEPLPAEAPWARRPLDPRRRSLPAGDALYLSFTPPQPSRGHDRLDLPVTIRSVHRPFEDRERQELGSPDERLQDSSDPDTGSEEEGSSSRLSPPHSPRDFTRMQDIPEETESRDGEPVASES.

The Phorbol-ester/DAG-type zinc finger occupies 12 to 59 (GHLFTTISVSGMTMCYACNKSITAKEALICPTCNVTIHNRCKDTLANC). Phosphoserine is present on residues Ser-82, Ser-95, Ser-102, Ser-106, Ser-110, Ser-124, Ser-136, Ser-145, Ser-147, and Ser-150. Residues 104–134 (RQSLLGSRRGRSPLSLAKSVSTTNIAGHFND) form an interaction with DYNLT1 region. Positions 209–406 (KQQDVIYELI…KELLSNVDQD (198 aa)) constitute a DH domain. Lys-327 carries the post-translational modification N6-acetyllysine. A PH domain is found at 446–545 (KLIHDGCLLW…WIRVIQQSVR (100 aa)). The stretch at 561–588 (EAYLRRIKMELQQKDRALVELLQEKVGL) forms a coiled coil. Ser-619 and Ser-622 each carry phosphoserine. Position 653 is a phosphothreonine; by MAPK1 or MAPK3 (Thr-653). Residues 659–679 (LPVETDSGGNTSPGVTANGEA) form a disordered region. Phosphoserine is present on residues Ser-665, Ser-670, Ser-685, and Ser-756. Residues 742–761 (PEGPERREKLTRANSRDGEA) show a composition bias toward basic and acidic residues. Residues 742–770 (PEGPERREKLTRANSRDGEAGRAGAAPVA) form a disordered region. Positions 772–841 (EKQATELALL…RQLAALGHTE (70 aa)) form a coiled coil. The residue at position 860 (Ser-860) is a Phosphoserine; by PAK1 and AURKA. The tract at residues 867 to 961 (LYLSFTPPQP…RDGEPVASES (95 aa)) is disordered. Tyr-868 is modified (phosphotyrosine). Ser-870 is subject to Phosphoserine; by PAK4. Residues 894 to 913 (RPFEDRERQELGSPDERLQD) show a composition bias toward basic and acidic residues. A phosphoserine mark is found at Ser-906, Ser-914, and Ser-915. Over residues 915-925 (SDPDTGSEEEG) the composition is skewed to acidic residues. Thr-919 is modified (phosphothreonine). Residues Ser-921, Ser-927, Ser-928, and Ser-931 each carry the phosphoserine modification. Position 935 is a phosphoserine; by CDK1 (Ser-935).

In terms of assembly, found in a complex composed at least of ARHGEF2, NOD2 and RIPK2. Interacts with RIPK2; the interaction mediates tyrosine phosphorylation of RIPK2 by Src kinase CSK. Interacts with RIPK1 and RIPK3. Interacts with YWHAZ/14-3-3 zeta; when phosphorylated at Ser-860. Interacts with the kinases PAK4, AURKA and MAPK1. Interacts with RHOA and RAC1. Interacts with NOD1. Interacts (via the N- terminal zinc finger) with CAPN6 (via domain II). Interacts with DYNLT1. Phosphorylation of Ser-860 by PAK1 induces binding to protein YWHAZ, promoting its relocation to microtubules and the inhibition of its activity. Phosphorylated by AURKA and CDK1 during mitosis, which negatively regulates its activity. Phosphorylation by MAPK1 or MAPK3 increases nucleotide exchange activity. Phosphorylation by PAK4 releases GEF-H1 from the microtubules. Phosphorylated on serine, threonine and tyrosine residues in a RIPK2-dependent manner.

The protein localises to the cytoplasm. It localises to the cytoskeleton. The protein resides in the cell junction. It is found in the tight junction. Its subcellular location is the golgi apparatus. The protein localises to the spindle. It localises to the cytoplasmic vesicle. In terms of biological role, activates Rho-GTPases by promoting the exchange of GDP for GTP. May be involved in epithelial barrier permeability, cell motility and polarization, dendritic spine morphology, antigen presentation, leukemic cell differentiation, cell cycle regulation, innate immune response, and cancer. Binds Rac-GTPases, but does not seem to promote nucleotide exchange activity toward Rac-GTPases. May stimulate instead the cortical activity of Rac. Inactive toward CDC42, TC10, or Ras-GTPases. Forms an intracellular sensing system along with NOD1 for the detection of microbial effectors during cell invasion by pathogens. Involved in innate immune signaling transduction pathway promoting cytokine IL6/interleukin-6 and TNF-alpha secretion in macrophage upon stimulation by bacterial peptidoglycans; acts as a signaling intermediate between NOD2 receptor and RIPK2 kinase. Contributes to the tyrosine phosphorylation of RIPK2 through Src tyrosine kinase leading to NF-kappaB activation by NOD2. Overexpression activates Rho-, but not Rac-GTPases, and increases paracellular permeability. Involved in neuronal progenitor cell division and differentiation. Involved in the migration of precerebellar neurons. This Sus scrofa (Pig) protein is Rho guanine nucleotide exchange factor 2 (ARHGEF2).